We begin with the raw amino-acid sequence, 162 residues long: Corticoliberin-1 (162 aa).

The N-terminal stretch at 1–24 is a signal peptide; sequence MKLNFLVTTVALLVAFPPPYECRA. The propeptide occupies 25-119; that stretch reads IDSSSNQPAT…ALDSEERERR (95 aa). Phe-160 carries the post-translational modification Phenylalanine amide.

It belongs to the sauvagine/corticotropin-releasing factor/urotensin I family.

It is found in the secreted. In terms of biological role, this hormone from hypothalamus regulates the release of corticotropin from pituitary gland. This chain is Corticoliberin-1 (crf1), found in Catostomus commersonii (White sucker).